A 224-amino-acid polypeptide reads, in one-letter code: Ribonuclease 3 (224 aa).

Residues 5–127 (LERLCRRLNY…ILAAIYLDGG (123 aa)) form the RNase III domain. E40 is a binding site for Mg(2+). Residue D44 is part of the active site. Positions 113 and 116 each coordinate Mg(2+). E116 is an active-site residue. In terms of domain architecture, DRBM spans 154–224 (DAKTQLQEFL…AKAMLEQLQG (71 aa)).

It belongs to the ribonuclease III family. As to quaternary structure, homodimer. The cofactor is Mg(2+).

The protein resides in the cytoplasm. It catalyses the reaction Endonucleolytic cleavage to 5'-phosphomonoester.. Digests double-stranded RNA. Involved in the processing of primary rRNA transcript to yield the immediate precursors to the large and small rRNAs (23S and 16S). Processes some mRNAs, and tRNAs when they are encoded in the rRNA operon. Processes pre-crRNA and tracrRNA of type II CRISPR loci if present in the organism. The chain is Ribonuclease 3 from Legionella pneumophila (strain Lens).